We begin with the raw amino-acid sequence, 877 residues long: (E,E)-geranyllinalool synthase (877 aa).

Positions 540 and 544 each coordinate Mg(2+). Residues D540, D544, R677, and N680 each contribute to the substrate site. The DDXXD motif signature appears at 540–544 (DDFFD). N680, S684, and E688 together coordinate Mg(2+).

It belongs to the terpene synthase family. Tpsf subfamily. Requires Mg(2+) as cofactor. Mn(2+) is required as a cofactor. As to expression, expressed in leaves and flowers.

It is found in the cytoplasm. The enzyme catalyses (2E,6E,10E)-geranylgeranyl diphosphate + H2O = (6E,10E)-geranyllinalool + diphosphate. It functions in the pathway secondary metabolite biosynthesis; terpenoid biosynthesis. In terms of biological role, involved in the biosynthesis of homoterpenes, attractants of herbivores parasitoids and predators (e.g. predatory mites and parasitoid wasps). Involved in diterpene (C20) biosynthesis. Catalyzes the conversion of geranylgeranyl diphosphate to (E,E)-geranyllinalool, the precursor of the insect-induced volatile C16-homoterpene TMTT. This is (E,E)-geranyllinalool synthase from Arabidopsis thaliana (Mouse-ear cress).